The primary structure comprises 1603 residues: Gag-Pol polyprotein (1603 aa).

The segment covering 128–141 (VGETTVQRDAKMAP) has biased composition (basic and acidic residues). Residues 128-150 (VGETTVQRDAKMAPEETATPKTV) form a disordered region. A PPXY motif motif is present at residues 172 to 175 (PPPY). Residues 180–184 (LYPSL) carry the LYPX(n)L motif motif. Residues 181–215 (YPSLAGVGEQQGQGGDTPRGAEQPRAEPGHAGLAP) are disordered. The short motif at 219–229 (LTDWARIREEL) is the Nuclear export signal element. 2 consecutive CCHC-type zinc fingers follow at residues 507-524 (RLCY…QCPK) and 533-550 (ERCQ…QCRR). Positions 544-571 (NAKQCRRRDSNQGQRPGRGLSSGPWPVS) are disordered. Positions 609 to 690 (ITALLDSGAD…VRGSILGRDC (82 aa)) constitute a Peptidase A2 domain. The For protease activity; shared with dimeric partner role is filled by Asp614. The Reverse transcriptase domain maps to 750–938 (LQLGHIEPSL…PGVQYLGYKL (189 aa)). 7 residues coordinate Mg(2+): Asp815, Asp890, Asp891, Asp1158, Glu1192, Asp1213, and Asp1272. The region spanning 1149–1280 (PVPGPTVFTD…ADSQATFQAY (132 aa)) is the RNase H type-1 domain. Residues 1280–1321 (YPLREAKDLHTTLHIGPRALSKACNISMQQAREVVQTCPHCN) form an Integrase-type zinc finger. His1289, His1293, Cys1317, and Cys1320 together coordinate Zn(2+). Residues 1333–1496 (RGLGPLQIWQ…TPVQKHWRPT (164 aa)) form the Integrase catalytic domain. Mg(2+) contacts are provided by Asp1344, Asp1401, and Glu1437. The integrase-type DNA-binding region spans 1502-1550 (PPVKIRIETGEWEKGWNVLVWGRGYAAVKNRDTDKVIWVPSRKVKPDIT). The segment at 1548–1567 (DITQKDEVTKKDEASPLFAG) is involved in homooctamerization. Over residues 1549-1561 (ITQKDEVTKKDEA) the composition is skewed to basic and acidic residues. The interval 1549 to 1603 (ITQKDEVTKKDEASPLFAGSSDWIPWGDEQEGLQEEAASNKQEGPGEDTLAANES) is disordered.

As to quaternary structure, active as a homodimer. In terms of assembly, homodimer. Homomultimer. Homohexamer. Homodimer; further associates as a homooctamer. As to quaternary structure, heterodimer of alpha and beta subunits. Three forms of RT exist: alpha-alpha (alpha-Pol), beta-beta (beta-Pol), and alpha-beta, with the major form being the heterodimer. Both the polymerase and RNase H active sites are located in the alpha subunit of heterodimeric RT alpha-beta. The cofactor is Mg(2+). Mn(2+) is required as a cofactor. Specific enzymatic cleavages in vivo yield mature proteins. In terms of processing, capsid protein p27: The cleavage at the C-terminus is slowly trimmed by the viral protease, sometimes being cut internally thereby generating the short version of the capsid protein and a capsid protein C-terminally extended by 3 amino acids in a ratio of 2:1.

The protein resides in the virion. It catalyses the reaction DNA(n) + a 2'-deoxyribonucleoside 5'-triphosphate = DNA(n+1) + diphosphate. It carries out the reaction Endonucleolytic cleavage to 5'-phosphomonoester.. Functionally, capsid protein p27: Self-associates to form the irregular polyhedron core composed of hexamers and pentamers, that encapsulates the genomic RNA-nucleocapsid complex. Assembles as a tube in vitro. Binds to inositol hexakisphosphate (IP6), which allows the assembly of the polyhedral capsid. Plays a role in the oligomerization of the Gag polyprotein and in the stabilization of the immature particle. Essential layering element during tube assembly. Allows the cooperative binging of Gag to the host plasma membrane. In terms of biological role, binds strongly to viral nucleic acids and promotes their packaging. Plays a role in the maturation-stabilization of the viral dimeric RNA via highly structured zinc-binding motifs. Its function is as follows. The aspartyl protease mediates proteolytic cleavages of Gag and Gag-Pol polyproteins during or shortly after the release of the virion from the plasma membrane. Cleavages take place as an ordered, step-wise cascade to yield mature proteins. This process is called maturation. Displays maximal activity during the budding process just prior to particle release from the cell. Functionally, catalyzes viral DNA integration into the host chromosome, by performing a series of DNA cutting and joining reactions. This recombination event is an essential step in the viral replication cycle. Has a strong preference for using the 3'-OH at the viral DNA end as a nucleophile. The protein is Gag-Pol polyprotein (gag-pol) of Rous sarcoma virus subgroup B (strain Schmidt-Ruppin) (RSV-SR-B).